The primary structure comprises 185 residues: Elongation factor P (185 aa).

Belongs to the elongation factor P family.

The protein resides in the cytoplasm. Its pathway is protein biosynthesis; polypeptide chain elongation. In terms of biological role, involved in peptide bond synthesis. Stimulates efficient translation and peptide-bond synthesis on native or reconstituted 70S ribosomes in vitro. Probably functions indirectly by altering the affinity of the ribosome for aminoacyl-tRNA, thus increasing their reactivity as acceptors for peptidyl transferase. This is Elongation factor P from Aromatoleum aromaticum (strain DSM 19018 / LMG 30748 / EbN1) (Azoarcus sp. (strain EbN1)).